The primary structure comprises 368 residues: Phospho-N-acetylmuramoyl-pentapeptide-transferase (368 aa).

The next 10 membrane-spanning stretches (helical) occupy residues 34-54 (GAVV…IDHL), 79-99 (TPTM…VLWA), 102-122 (LNPY…VGFY), 140-160 (ARIL…VRLG), 176-196 (LVIK…VGAG), 207-227 (GLAI…AYLA), 247-267 (LAVL…FNAP), 271-291 (IFMG…IAVA), 296-316 (IVLA…IVQV), and 345-365 (QIVI…LSTL).

This sequence belongs to the glycosyltransferase 4 family. MraY subfamily. Requires Mg(2+) as cofactor.

Its subcellular location is the cell inner membrane. The enzyme catalyses UDP-N-acetyl-alpha-D-muramoyl-L-alanyl-gamma-D-glutamyl-meso-2,6-diaminopimeloyl-D-alanyl-D-alanine + di-trans,octa-cis-undecaprenyl phosphate = di-trans,octa-cis-undecaprenyl diphospho-N-acetyl-alpha-D-muramoyl-L-alanyl-D-glutamyl-meso-2,6-diaminopimeloyl-D-alanyl-D-alanine + UMP. It participates in cell wall biogenesis; peptidoglycan biosynthesis. In terms of biological role, catalyzes the initial step of the lipid cycle reactions in the biosynthesis of the cell wall peptidoglycan: transfers peptidoglycan precursor phospho-MurNAc-pentapeptide from UDP-MurNAc-pentapeptide onto the lipid carrier undecaprenyl phosphate, yielding undecaprenyl-pyrophosphoryl-MurNAc-pentapeptide, known as lipid I. The protein is Phospho-N-acetylmuramoyl-pentapeptide-transferase of Bradyrhizobium sp. (strain BTAi1 / ATCC BAA-1182).